We begin with the raw amino-acid sequence, 170 residues long: dCTP pyrophosphatase 1 (170 aa).

The segment at 1-27 is disordered; that stretch reads MSVAGGEIRGDTGGEDTAAPGRFSFSP. Ser-2 carries the N-acetylserine modification. Ser-2 carries the post-translational modification Phosphoserine. Residue Thr-12 is modified to Phosphothreonine. Residues His-38 and 47–51 contribute to the substrate site; that span reads WEQFH. Mg(2+)-binding residues include Glu-63 and Glu-66. Position 73 (Trp-73) interacts with substrate. Ser-85 bears the Phosphoserine mark. Residues Glu-95 and Asp-98 each coordinate Mg(2+). Tyr-102 serves as a coordination point for substrate. Residues 147–170 are disordered; the sequence is GAISEDQAVGPADIPCDSTGQTST.

Homotetramer. Requires Mg(2+) as cofactor.

It is found in the mitochondrion. Its subcellular location is the nucleus. The protein resides in the cytoplasm. It localises to the cytosol. It carries out the reaction dCTP + H2O = dCMP + diphosphate + H(+). Inhibited by the reaction end product PPi. Inhibited by dCDP. Inhibited by triptolide. Functionally, hydrolyzes deoxynucleoside triphosphates (dNTPs) to the corresponding nucleoside monophosphates. Has a strong preference for dCTP and its analogs including 5-iodo-dCTP and 5-methyl-dCTP for which it may even have a higher efficiency. May protect DNA or RNA against the incorporation of these genotoxic nucleotide analogs through their catabolism. This chain is dCTP pyrophosphatase 1, found in Homo sapiens (Human).